Reading from the N-terminus, the 196-residue chain is Transmembrane protein 52 (196 aa).

Residues 1 to 28 (MAPGPSATQGILLLLPLLPLSQVTLGSA) form the signal peptide. Residues 47 to 67 (LWHVGLILLAILLMLLCGVTA) traverse the membrane as a helical segment. A disordered region spans residues 162–196 (EEVAAPSEKTNSLPEALEPETTGGPQEPGPSAQRP).

It is found in the membrane. This is Transmembrane protein 52 (Tmem52) from Mus musculus (Mouse).